The following is a 119-amino-acid chain: Immunoglobulin heavy variable 2-5 (119 aa).

The first 19 residues, M1–S19, serve as a signal peptide directing secretion. At Q20 the chain carries Pyrrolidone carboxylic acid. The segment at Q20–S44 is framework-1. An Ig-like domain is found at Q20–R119. Cysteines 41 and 116 form a disulfide. Residues G45–G54 are complementarity-determining-1. The framework-2 stretch occupies residues V55 to L71. The segment at I72–K78 is complementarity-determining-2. The tract at residues R79–C116 is framework-3. The complementarity-determining-3 stretch occupies residues A117–R119.

Immunoglobulins are composed of two identical heavy chains and two identical light chains; disulfide-linked.

The protein localises to the secreted. It is found in the cell membrane. Its function is as follows. V region of the variable domain of immunoglobulin heavy chains that participates in the antigen recognition. Immunoglobulins, also known as antibodies, are membrane-bound or secreted glycoproteins produced by B lymphocytes. In the recognition phase of humoral immunity, the membrane-bound immunoglobulins serve as receptors which, upon binding of a specific antigen, trigger the clonal expansion and differentiation of B lymphocytes into immunoglobulins-secreting plasma cells. Secreted immunoglobulins mediate the effector phase of humoral immunity, which results in the elimination of bound antigens. The antigen binding site is formed by the variable domain of one heavy chain, together with that of its associated light chain. Thus, each immunoglobulin has two antigen binding sites with remarkable affinity for a particular antigen. The variable domains are assembled by a process called V-(D)-J rearrangement and can then be subjected to somatic hypermutations which, after exposure to antigen and selection, allow affinity maturation for a particular antigen. The protein is Immunoglobulin heavy variable 2-5 of Homo sapiens (Human).